The primary structure comprises 1342 residues: DNA-directed RNA polymerase subunit beta (1342 aa).

It belongs to the RNA polymerase beta chain family. In terms of assembly, the RNAP catalytic core consists of 2 alpha, 1 beta, 1 beta' and 1 omega subunit. When a sigma factor is associated with the core the holoenzyme is formed, which can initiate transcription.

The enzyme catalyses RNA(n) + a ribonucleoside 5'-triphosphate = RNA(n+1) + diphosphate. In terms of biological role, DNA-dependent RNA polymerase catalyzes the transcription of DNA into RNA using the four ribonucleoside triphosphates as substrates. This Cronobacter sakazakii (strain ATCC BAA-894) (Enterobacter sakazakii) protein is DNA-directed RNA polymerase subunit beta.